The chain runs to 140 residues: Putative pre-16S rRNA nuclease (140 aa).

The protein belongs to the YqgF nuclease family.

Its subcellular location is the cytoplasm. Could be a nuclease involved in processing of the 5'-end of pre-16S rRNA. The chain is Putative pre-16S rRNA nuclease from Chlorobium chlorochromatii (strain CaD3).